Consider the following 745-residue polypeptide: MEKDVVSLQDALEHGLTAEEFQKIQEILGRIPNSTELGIFSAMWSEHCSYKNSVLKLKTLPTSSDKLLAKAGEENAGAMDIGDGLAVVFKIESHNHPTAVEPYQGAATGVGGIMRDIFTMGARPIVSLNSLRFGNPDEPRNKYLLSRAVKGIGDYGNSLGIAVSGGELFIDECFSKNPLVNAMTVGIVRHDQMASATTGGQVGNAVYIVGATTGRDGIHGASFASKDLSKESESKRSAVQVGDPFMEKLLMEASLEAIQKGLLIGIQDMGAAGISCATSEMSAKGKTGMKIDLDLVPFRETGMNAYEVMLSESQERMLVVPKKGKESELVSIFEKWNLNAVRIGEVTADGFIEIYMGGKLKAHIPAESLVLGGGAPRYERETKRPSYLDAVKTWKPNSILDITPGANTKDVLLNILSSWNVCSRKPITEQYDSEVGLVKLIGPGLDGGLSSIPDTNKALATATDCNSRYTYLDPYKGAQFAVCEAARNVYVTGATPYGVTNNLNFANPYIPENYYMFSECIRGMGDACRFLGLPVTGGNVSFYNESPEGPIFPTPTIGMVGILQDKKKFLSNFPKEVGIELAVLGNFRPSLGGSEYLKKIHGQVNGSIPEIDIKEELELCKLILSLNEKGALKSARDLSLGGIGIALSKTILFSGLGIDAELIAFKQSRLDLTLFGESSTTVLVGFDSSWKEKIREQTEEKGLKFYPVGKTTSSELLKLKDIGVEVSFSELNGPYEKGLEVVFAL.

Residue histidine 47 is part of the active site. Tyrosine 50 and lysine 90 together coordinate ATP. Position 92 (glutamate 92) interacts with Mg(2+). Residues 93-96 and arginine 115 each bind substrate; that span reads SHNH. The active-site Proton acceptor is histidine 94. Residue aspartate 116 coordinates Mg(2+). Glutamine 240 provides a ligand contact to substrate. Aspartate 268 is a binding site for Mg(2+). 312 to 314 lines the substrate pocket; the sequence is ESQ. ATP contacts are provided by asparagine 501 and glycine 538. Asparagine 539 is a binding site for Mg(2+). Substrate is bound at residue serine 541.

Belongs to the FGAMS family. Monomer. Part of the FGAM synthase complex composed of 1 PurL, 1 PurQ and 2 PurS subunits.

It localises to the cytoplasm. It carries out the reaction N(2)-formyl-N(1)-(5-phospho-beta-D-ribosyl)glycinamide + L-glutamine + ATP + H2O = 2-formamido-N(1)-(5-O-phospho-beta-D-ribosyl)acetamidine + L-glutamate + ADP + phosphate + H(+). Its pathway is purine metabolism; IMP biosynthesis via de novo pathway; 5-amino-1-(5-phospho-D-ribosyl)imidazole from N(2)-formyl-N(1)-(5-phospho-D-ribosyl)glycinamide: step 1/2. Functionally, part of the phosphoribosylformylglycinamidine synthase complex involved in the purines biosynthetic pathway. Catalyzes the ATP-dependent conversion of formylglycinamide ribonucleotide (FGAR) and glutamine to yield formylglycinamidine ribonucleotide (FGAM) and glutamate. The FGAM synthase complex is composed of three subunits. PurQ produces an ammonia molecule by converting glutamine to glutamate. PurL transfers the ammonia molecule to FGAR to form FGAM in an ATP-dependent manner. PurS interacts with PurQ and PurL and is thought to assist in the transfer of the ammonia molecule from PurQ to PurL. The chain is Phosphoribosylformylglycinamidine synthase subunit PurL from Leptospira borgpetersenii serovar Hardjo-bovis (strain JB197).